We begin with the raw amino-acid sequence, 149 residues long: Large ribosomal subunit protein bL9 (149 aa).

It belongs to the bacterial ribosomal protein bL9 family.

Its function is as follows. Binds to the 23S rRNA. This chain is Large ribosomal subunit protein bL9, found in Anaeromyxobacter dehalogenans (strain 2CP-1 / ATCC BAA-258).